The chain runs to 244 residues: Putative membrane peptidase YdiL (244 aa).

Helical transmembrane passes span 7-27 (FIIL…PLLF), 44-64 (AQGL…LLIL), 80-100 (IGLS…SQGI), 127-147 (AVPL…EIIF), 159-179 (TNFF…HADL), and 202-222 (IWVP…MQLE). Catalysis depends on proton donor/acceptor residues Glu143 and His176.

Belongs to the peptidase U48 family.

Its subcellular location is the cell membrane. May function as endopeptidase which proteolytically removes the C-terminal three residues of farnesylated peptides containing the CAAX motif where C is cysteine, A is an aliphatic amino acid and X is any amino acid. The chain is Putative membrane peptidase YdiL (ydiL) from Bacillus subtilis (strain 168).